A 435-amino-acid chain; its full sequence is Serine/threonine-protein kinase 40 (435 aa).

The span at 1–10 shows a compositional bias: basic and acidic residues; it reads MKRRASDRGA. The interval 1–25 is disordered; that stretch reads MKRRASDRGAGETSARAKALGSGIS. Positions 35-331 constitute a Protein kinase domain; sequence FILGPRLGNS…ADVLEALSAI (297 aa). Residues 41–49 and Lys-66 each bind ATP; that span reads LGNSPVPSI. The active-site Proton acceptor is Arg-196.

The protein belongs to the protein kinase superfamily. CAMK Ser/Thr protein kinase family. Strongly expressed in heart, brain, placenta, lung, skeletal muscle, kidney, spleen, thymus, prostate, liver, pancreas, testis, ovary, small intestine, colon and peripheral blood leukocytes.

It localises to the nucleus. The protein resides in the cytoplasm. The enzyme catalyses L-seryl-[protein] + ATP = O-phospho-L-seryl-[protein] + ADP + H(+). It catalyses the reaction L-threonyl-[protein] + ATP = O-phospho-L-threonyl-[protein] + ADP + H(+). Its function is as follows. May be a negative regulator of NF-kappa-B and p53-mediated gene transcription. The chain is Serine/threonine-protein kinase 40 (STK40) from Homo sapiens (Human).